A 374-amino-acid chain; its full sequence is uncharacterized protein (374 aa).

An N-terminal signal peptide occupies residues 1–21 (MSIISRVCIPCAVLLFAQLHA). The Fibronectin type-III domain occupies 22–102 (KELVHVSQLK…ASASAWTSLS (81 aa)).

This is an uncharacterized protein from Treponema pallidum (strain Nichols).